Consider the following 152-residue polypeptide: Transcriptional repressor NrdR (152 aa).

The span at 1–10 shows a compositional bias: polar residues; sequence MKCPSCQHNG. Residues 1 to 21 form a disordered region; the sequence is MKCPSCQHNGSRVLDSRPADE. The segment at 3 to 34 is a zinc-finger region; sequence CPSCQHNGSRVLDSRPADEGKSIRRRRECEAC. Residues 49 to 139 enclose the ATP-cone domain; that stretch reads LIVVKKEGVR…VYRQFKDINV (91 aa).

Belongs to the NrdR family. The cofactor is Zn(2+).

Its function is as follows. Negatively regulates transcription of bacterial ribonucleotide reductase nrd genes and operons by binding to NrdR-boxes. This chain is Transcriptional repressor NrdR, found in Bacillus velezensis (strain DSM 23117 / BGSC 10A6 / LMG 26770 / FZB42) (Bacillus amyloliquefaciens subsp. plantarum).